Reading from the N-terminus, the 154-residue chain is 6,7-dimethyl-8-ribityllumazine synthase (154 aa).

5-amino-6-(D-ribitylamino)uracil contacts are provided by residues Phe-21, 55-57, and 79-81; these read AFE and CVI. Position 84-85 (84-85) interacts with (2S)-2-hydroxy-3-oxobutyl phosphate; it reads AT. His-87 (proton donor) is an active-site residue. Phe-112 is a 5-amino-6-(D-ribitylamino)uracil binding site. Arg-126 serves as a coordination point for (2S)-2-hydroxy-3-oxobutyl phosphate.

Belongs to the DMRL synthase family. In terms of assembly, forms an icosahedral capsid composed of 60 subunits, arranged as a dodecamer of pentamers.

The catalysed reaction is (2S)-2-hydroxy-3-oxobutyl phosphate + 5-amino-6-(D-ribitylamino)uracil = 6,7-dimethyl-8-(1-D-ribityl)lumazine + phosphate + 2 H2O + H(+). The protein operates within cofactor biosynthesis; riboflavin biosynthesis; riboflavin from 2-hydroxy-3-oxobutyl phosphate and 5-amino-6-(D-ribitylamino)uracil: step 1/2. Its function is as follows. Catalyzes the formation of 6,7-dimethyl-8-ribityllumazine by condensation of 5-amino-6-(D-ribitylamino)uracil with 3,4-dihydroxy-2-butanone 4-phosphate. This is the penultimate step in the biosynthesis of riboflavin. The polypeptide is 6,7-dimethyl-8-ribityllumazine synthase (Staphylococcus aureus (strain Newman)).